The following is a 292-amino-acid chain: Pantothenate synthetase (292 aa).

30-37 (MGFLHIGH) provides a ligand contact to ATP. Residue His37 is the Proton donor of the active site. (R)-pantoate is bound at residue Gln61. Residue Gln61 coordinates beta-alanine. An ATP-binding site is contributed by 147–150 (GEKD). Gln153 provides a ligand contact to (R)-pantoate. ATP-binding positions include Val176 and 184-187 (CSSR).

It belongs to the pantothenate synthetase family. Homodimer.

Its subcellular location is the cytoplasm. It carries out the reaction (R)-pantoate + beta-alanine + ATP = (R)-pantothenate + AMP + diphosphate + H(+). The protein operates within cofactor biosynthesis; (R)-pantothenate biosynthesis; (R)-pantothenate from (R)-pantoate and beta-alanine: step 1/1. Catalyzes the condensation of pantoate with beta-alanine in an ATP-dependent reaction via a pantoyl-adenylate intermediate. This Agrobacterium fabrum (strain C58 / ATCC 33970) (Agrobacterium tumefaciens (strain C58)) protein is Pantothenate synthetase.